Consider the following 286-residue polypeptide: Beta-lactamase SHV-8 (286 aa).

A signal peptide spans 1-21; that stretch reads MRYIRLCIISLLATLPLAVHA. Residue serine 66 is the Acyl-ester intermediate of the active site. Cysteine 73 and cysteine 119 are oxidised to a cystine. The active-site Proton acceptor is the glutamate 164. Position 230–232 (230–232) interacts with substrate; it reads KTG.

This sequence belongs to the class-A beta-lactamase family.

The enzyme catalyses a beta-lactam + H2O = a substituted beta-amino acid. SHV enzymes hydrolyze broad spectrum cephalosporins notably cefotaxime and ceftazidime. The polypeptide is Beta-lactamase SHV-8 (bla) (Escherichia coli).